A 202-amino-acid chain; its full sequence is Small ribosomal subunit protein uS4 (202 aa).

The interval 22–43 (TRKNARRAYPPGQHGQNRRKRS) is disordered. Residues 90–152 (MRLDNTVFRL…DKSRKLVQAN (63 aa)) form the S4 RNA-binding domain.

Belongs to the universal ribosomal protein uS4 family. Part of the 30S ribosomal subunit. Contacts protein S5. The interaction surface between S4 and S5 is involved in control of translational fidelity.

One of the primary rRNA binding proteins, it binds directly to 16S rRNA where it nucleates assembly of the body of the 30S subunit. In terms of biological role, with S5 and S12 plays an important role in translational accuracy. The polypeptide is Small ribosomal subunit protein uS4 (Gloeothece citriformis (strain PCC 7424) (Cyanothece sp. (strain PCC 7424))).